The following is a 185-amino-acid chain: Ribosome-recycling factor (185 aa).

The tract at residues 141–161 (KQEKDKKISEDDLKRAEKEVQ) is disordered.

This sequence belongs to the RRF family.

It is found in the cytoplasm. Responsible for the release of ribosomes from messenger RNA at the termination of protein biosynthesis. May increase the efficiency of translation by recycling ribosomes from one round of translation to another. This Geotalea uraniireducens (strain Rf4) (Geobacter uraniireducens) protein is Ribosome-recycling factor.